A 259-amino-acid polypeptide reads, in one-letter code: uncharacterized protein (259 aa).

One can recognise a Radical SAM core domain in the interval 19-249 (TKIPGAKYVI…DEVINTIKKK (231 aa)). [4Fe-4S] cluster is bound by residues Cys34, Cys38, and Cys41.

The cofactor is [4Fe-4S] cluster.

This is an uncharacterized protein from Methanocaldococcus jannaschii (strain ATCC 43067 / DSM 2661 / JAL-1 / JCM 10045 / NBRC 100440) (Methanococcus jannaschii).